The chain runs to 362 residues: Peptide chain release factor 1 (362 aa).

At Q237 the chain carries N5-methylglutamine.

Belongs to the prokaryotic/mitochondrial release factor family. Post-translationally, methylated by PrmC. Methylation increases the termination efficiency of RF1.

The protein localises to the cytoplasm. Functionally, peptide chain release factor 1 directs the termination of translation in response to the peptide chain termination codons UAG and UAA. The protein is Peptide chain release factor 1 of Marinomonas sp. (strain MWYL1).